The sequence spans 375 residues: Alcohol dehydrogenase E chain (375 aa).

Ser2 is modified (N-acetylserine). Zn(2+)-binding residues include Cys47, Ser49, His68, Cys98, Cys101, Cys104, Cys112, and Cys175. The an alcohol site is built by Ser49 and His68. Ser49 contributes to the NAD(+) binding site. Residues 200 to 205, Asp224, Lys229, Val293, 293 to 295, Phe320, and Arg370 each bind NAD(+); these read GLGGVG and VGV.

This sequence belongs to the zinc-containing alcohol dehydrogenase family. Class-I subfamily. Dimer of identical or non-identical chains of two types (E and S) coded by 2 separate genes at different loci. It depends on Zn(2+) as a cofactor.

It localises to the cytoplasm. The catalysed reaction is a primary alcohol + NAD(+) = an aldehyde + NADH + H(+). The enzyme catalyses a secondary alcohol + NAD(+) = a ketone + NADH + H(+). The sequence is that of Alcohol dehydrogenase E chain from Equus caballus (Horse).